The primary structure comprises 164 residues: Microfibrillar-associated protein 5 (164 aa).

The signal sequence occupies residues 1-28; the sequence is MLFLGQKALLLVLAISIPSDWLPLGVSG. A Cell attachment site motif is present at residues 30–32; sequence RGD. Asn-70 is a glycosylation site (N-linked (GlcNAc...) asparagine).

The protein belongs to the MFAP family. As to quaternary structure, interacts with TGFB2. Interacts with BMP2. Interacts with FBN1 (via N-terminal domain) and FBN2. In terms of processing, forms intermolecular disulfide bonds either with other MAGP-2 molecules or with other components of the microfibrils.

The protein resides in the secreted. Its subcellular location is the extracellular space. The protein localises to the extracellular matrix. In terms of biological role, may play a role in hematopoiesis. In the cardiovascular system, could regulate growth factors or participate in cell signaling in maintaining large vessel integrity. Component of the elastin-associated microfibrils. This Mus musculus (Mouse) protein is Microfibrillar-associated protein 5 (Mfap5).